The sequence spans 222 residues: Ribosomal RNA large subunit methyltransferase E (222 aa).

5 residues coordinate S-adenosyl-L-methionine: Gly-64, Trp-66, Asp-92, Asp-108, and Asp-133. The active-site Proton acceptor is Lys-173.

This sequence belongs to the class I-like SAM-binding methyltransferase superfamily. RNA methyltransferase RlmE family.

It is found in the cytoplasm. The catalysed reaction is uridine(2552) in 23S rRNA + S-adenosyl-L-methionine = 2'-O-methyluridine(2552) in 23S rRNA + S-adenosyl-L-homocysteine + H(+). Functionally, specifically methylates the uridine in position 2552 of 23S rRNA at the 2'-O position of the ribose in the fully assembled 50S ribosomal subunit. The protein is Ribosomal RNA large subunit methyltransferase E of Variovorax paradoxus (strain S110).